The following is a 253-amino-acid chain: Phosphoribosylaminoimidazole-succinocarboxamide synthase (253 aa).

It belongs to the SAICAR synthetase family.

It catalyses the reaction 5-amino-1-(5-phospho-D-ribosyl)imidazole-4-carboxylate + L-aspartate + ATP = (2S)-2-[5-amino-1-(5-phospho-beta-D-ribosyl)imidazole-4-carboxamido]succinate + ADP + phosphate + 2 H(+). The protein operates within purine metabolism; IMP biosynthesis via de novo pathway; 5-amino-1-(5-phospho-D-ribosyl)imidazole-4-carboxamide from 5-amino-1-(5-phospho-D-ribosyl)imidazole-4-carboxylate: step 1/2. The chain is Phosphoribosylaminoimidazole-succinocarboxamide synthase from Parvibaculum lavamentivorans (strain DS-1 / DSM 13023 / NCIMB 13966).